Consider the following 359-residue polypeptide: Probable S-adenosylmethionine-dependent methyltransferase At5g38100 (359 aa).

Residues Y19, C63, N68, D104, S133, and F134 each contribute to the S-adenosyl-L-homocysteine site. Mg(2+) contacts are provided by N172, D258, and F260.

It belongs to the methyltransferase superfamily. Type-7 methyltransferase family. Homodimer. Mg(2+) is required as a cofactor.

The protein is Probable S-adenosylmethionine-dependent methyltransferase At5g38100 of Arabidopsis thaliana (Mouse-ear cress).